Consider the following 374-residue polypeptide: Layilin (374 aa).

An N-terminal signal peptide occupies residues 1–24 (MQPGPALQAVLLAVLLSEPRSSKG). The Extracellular portion of the chain corresponds to 25-221 (RLLSGQLVCR…TKETFKESRE (197 aa)). Residues 37 to 177 (TRRPCYKVIY…CNMKNNFICK (141 aa)) form the C-type lectin domain. Intrachain disulfides connect Cys63-Cys176 and Cys142-Cys168. Asn109 is a glycosylation site (N-linked (GlcNAc...) asparagine). The disordered stretch occupies residues 184-212 (STTPSIRPGGEATEPPTPVLPEETQKEDT). The chain crosses the membrane as a helical span at residues 222–242 (AALNLAYILIPSIPLFLLLVV). Residues 243 to 374 (TSAACWVWIC…SGWVENEIYY (132 aa)) lie on the Cytoplasmic side of the membrane. Phosphoserine occurs at positions 279 and 292. The segment at 323–367 (DYDNMAVNPSESGFVTLASMESGFVTNDIYEFSPDRMGRSKESGW) is interaction with NF2. The segment at 330-374 (NPSESGFVTLASMESGFVTNDIYEFSPDRMGRSKESGWVENEIYY) is interaction with TLN1. A run of 5 repeats spans residues 333-337 (ESGFV), 343-347 (ESGFV), 349-352 (NDIY), 364-368 (ESGWV), and 370-373 (NEIY). Positions 333-368 (ESGFVTLASMESGFVTNDIYEFSPDRMGRSKESGWV) are 3 X 5 AA repeats of E-S-G-X-V. The 2 X 4 AA repeats of N-X-I-Y stretch occupies residues 349–373 (NDIYEFSPDRMGRSKESGWVENEIY).

In terms of assembly, interacts with NF2 and RDX. Interacts with TLN1. Widely expressed. Abundant in the ovary.

It localises to the membrane. In terms of biological role, receptor for hyaluronate. This Cricetulus griseus (Chinese hamster) protein is Layilin (LAYN).